Consider the following 278-residue polypeptide: Digeranylgeranylglyceryl phosphate synthase (278 aa).

The next 7 helical transmembrane spans lie at 12 to 32 (LKNC…ASNF), 34 to 54 (FGAL…CGFG), 92 to 112 (IMIF…MAVL), 129 to 149 (IIGN…GGIA), 199 to 219 (IYIS…PYLT), 221 to 241 (IFGI…LAGF), and 257 to 277 (SKNI…GSIF).

The protein belongs to the UbiA prenyltransferase family. DGGGP synthase subfamily. The cofactor is Mg(2+).

The protein resides in the cell membrane. The enzyme catalyses sn-3-O-(geranylgeranyl)glycerol 1-phosphate + (2E,6E,10E)-geranylgeranyl diphosphate = 2,3-bis-O-(geranylgeranyl)-sn-glycerol 1-phosphate + diphosphate. Its pathway is membrane lipid metabolism; glycerophospholipid metabolism. Functionally, prenyltransferase that catalyzes the transfer of the geranylgeranyl moiety of geranylgeranyl diphosphate (GGPP) to the C2 hydroxyl of (S)-3-O-geranylgeranylglyceryl phosphate (GGGP). This reaction is the second ether-bond-formation step in the biosynthesis of archaeal membrane lipids. The sequence is that of Digeranylgeranylglyceryl phosphate synthase from Methanococcus vannielii (strain ATCC 35089 / DSM 1224 / JCM 13029 / OCM 148 / SB).